We begin with the raw amino-acid sequence, 100 residues long: Small ubiquitin-related modifier 1 (100 aa).

Basic and acidic residues predominate over residues 1-12 (MSAAGEEDKKPA). A disordered region spans residues 1 to 23 (MSAAGEEDKKPAGGEGGGAHINL). The region spanning 19–96 (AHINLKVKGQ…IDAMLHQTGG (78 aa)) is the Ubiquitin-like domain. G96 is covalently cross-linked (Glycyl lysine isopeptide (Gly-Lys) (interchain with K-? in acceptor proteins)).

This sequence belongs to the ubiquitin family. SUMO subfamily. As to quaternary structure, interacts with SAE2, SCE1 and SIZ1. Covalently attached to a number of proteins.

Its subcellular location is the nucleus. It is found in the cytoplasm. Ubiquitin-like protein which can be covalently attached to target lysines as a monomer. Does not seem to be involved in protein degradation and may function as an antagonist of ubiquitin in the degradation process. This chain is Small ubiquitin-related modifier 1 (SUMO1), found in Oryza sativa subsp. japonica (Rice).